The following is a 717-amino-acid chain: Cleavage stimulation factor subunit 3 (717 aa).

Residue serine 2 is modified to N-acetylserine. 9 HAT repeats span residues 45 to 77, 79 to 110, 117 to 152, 163 to 196, 221 to 261, 271 to 303, 319 to 352, 354 to 387, and 458 to 494; these read QPID…AEIK, KNYD…YVRE, SYKE…FLKG, QRIT…YEEG, KEYE…WEKS, LITK…YLEQ, LFSD…YEES, MKYE…FARR, and NEDN…FESN. The interval 683 to 704 is disordered; that stretch reads AVKRPNEDSDEDEEKGAVVPPV. Phosphoserine is present on serine 691.

Homodimer. The CSTF complex is composed of CSTF1 (50 kDa subunit), CSTF2 (64 kDa subunit) and CSTF3 (77 kDa subunit). CSTF3 directly interacts with CSTF1 and CSTF2. Interacts with FIP1L1.

Its subcellular location is the nucleus. Functionally, one of the multiple factors required for polyadenylation and 3'-end cleavage of mammalian pre-mRNAs. This is Cleavage stimulation factor subunit 3 (Cstf3) from Mus musculus (Mouse).